Reading from the N-terminus, the 116-residue chain is NADPH-dependent 7-cyano-7-deazaguanine reductase (116 aa).

Cys-31 serves as the catalytic Thioimide intermediate. Asp-38 acts as the Proton donor in catalysis. Substrate-binding positions include 53-55 (IEL) and 72-73 (YE).

It belongs to the GTP cyclohydrolase I family. QueF type 1 subfamily.

The protein resides in the cytoplasm. It catalyses the reaction 7-aminomethyl-7-carbaguanine + 2 NADP(+) = 7-cyano-7-deazaguanine + 2 NADPH + 3 H(+). It functions in the pathway tRNA modification; tRNA-queuosine biosynthesis. Functionally, catalyzes the NADPH-dependent reduction of 7-cyano-7-deazaguanine (preQ0) to 7-aminomethyl-7-deazaguanine (preQ1). The sequence is that of NADPH-dependent 7-cyano-7-deazaguanine reductase from Pelodictyon phaeoclathratiforme (strain DSM 5477 / BU-1).